We begin with the raw amino-acid sequence, 770 residues long: Molybdenum cofactor sulfurase (770 aa).

The residue at position 243 (Lys243) is an N6-(pyridoxal phosphate)lysine. Cys405 is an active-site residue. An MOSC domain is found at 611–769 (GDEVANWLCQ…LACGDPITVL (159 aa)). At Ser726 the chain carries Phosphoserine.

Belongs to the class-V pyridoxal-phosphate-dependent aminotransferase family. MOCOS subfamily. Requires pyridoxal 5'-phosphate as cofactor.

It catalyses the reaction Mo-molybdopterin + L-cysteine + AH2 = thio-Mo-molybdopterin + L-alanine + A + H2O. Its pathway is cofactor biosynthesis; molybdopterin biosynthesis. Sulfurates the molybdenum cofactor. Sulfation of molybdenum is essential for xanthine dehydrogenase (XDH) and aldehyde oxidase (ADO) enzymes in which molybdenum cofactor is liganded by 1 oxygen and 1 sulfur atom in active form. The polypeptide is Molybdenum cofactor sulfurase (Drosophila grimshawi (Hawaiian fruit fly)).